The chain runs to 87 residues: Large ribosomal subunit protein bL31B (87 aa).

Belongs to the bacterial ribosomal protein bL31 family. Type B subfamily. In terms of assembly, part of the 50S ribosomal subunit.

This chain is Large ribosomal subunit protein bL31B, found in Escherichia coli O8 (strain IAI1).